The chain runs to 306 residues: Ornithine carbamoyltransferase (306 aa).

Carbamoyl phosphate-binding positions include 54 to 57, Q81, R105, and 132 to 135; these read STRT and HPLQ. L-ornithine is bound by residues N162, D226, and 230–231; that span reads SM. Residues 266–267 and R294 each bind carbamoyl phosphate; that span reads CL.

Belongs to the aspartate/ornithine carbamoyltransferase superfamily. OTCase family.

It localises to the cytoplasm. The enzyme catalyses carbamoyl phosphate + L-ornithine = L-citrulline + phosphate + H(+). It functions in the pathway amino-acid biosynthesis; L-arginine biosynthesis; L-arginine from L-ornithine and carbamoyl phosphate: step 1/3. Functionally, reversibly catalyzes the transfer of the carbamoyl group from carbamoyl phosphate (CP) to the N(epsilon) atom of ornithine (ORN) to produce L-citrulline. This chain is Ornithine carbamoyltransferase, found in Sulfurisphaera tokodaii (strain DSM 16993 / JCM 10545 / NBRC 100140 / 7) (Sulfolobus tokodaii).